The following is a 464-amino-acid chain: 3-deoxy-D-manno-octulosonic acid transferase (464 aa).

The chain crosses the membrane as a helical; Signal-anchor span at residues 2–22 (MLLYYALSFILLPIYFIIILI). The 47-residue stretch at 47-93 (YSLDFLHNEANKERFKGDTERRTAAYTSVREDSSTGSTSKLPLEASY) folds into the RPE1 insert domain. Glutamate 107 acts as the Proton acceptor in catalysis. Residues 311–312 (PR), 352–354 (FGE), and 377–380 (NILE) each bind CMP.

Belongs to the glycosyltransferase group 1 family.

The protein resides in the cell inner membrane. It carries out the reaction lipid IVA (E. coli) + CMP-3-deoxy-beta-D-manno-octulosonate = alpha-Kdo-(2-&gt;6)-lipid IVA (E. coli) + CMP + H(+). The protein operates within bacterial outer membrane biogenesis; LPS core biosynthesis. Functionally, involved in lipopolysaccharide (LPS) biosynthesis. Catalyzes the transfer of 3-deoxy-D-manno-octulosonate (Kdo) residue(s) from CMP-Kdo to lipid IV(A), the tetraacyldisaccharide-1,4'-bisphosphate precursor of lipid A. This Rickettsia felis (strain ATCC VR-1525 / URRWXCal2) (Rickettsia azadi) protein is 3-deoxy-D-manno-octulosonic acid transferase (waaA).